The chain runs to 187 residues: Guanylate kinase (187 aa).

The region spanning 5-183 is the Guanylate kinase-like domain; sequence GRLTVLTGPS…ALKQLETHMQ (179 aa). 12-19 is an ATP binding site; that stretch reads GPSGVGKG.

Belongs to the guanylate kinase family.

The protein resides in the cytoplasm. The catalysed reaction is GMP + ATP = GDP + ADP. It catalyses the reaction dZMP + ATP = dZDP + ADP. It participates in purine metabolism. Its function is as follows. Essential for recycling GMP and indirectly, cGMP. (Microbial infection) Catalyzes the phosphorylation of dZMP to dZDP, when the bacterium is infected by a phage that produces the substrate for the synthesis of dZTP (2- amino-2'-deoxyadenosine 5'-triphosphate), which is then used by the phage as a DNA polymerase substrate. This Synechococcus sp. (strain CC9902) protein is Guanylate kinase.